A 114-amino-acid polypeptide reads, in one-letter code: Pro-FMRFamide-related neuropeptide FF (114 aa).

The N-terminal stretch at 1–21 (MDSKWAAVLLLLLLLRNWGHA) is a signal peptide. Positions 22–69 (EEAGSWGEDQVFAEEDKGPHPSQYAHTPDRIQTPGSLMRVLLQAMERP) are excised as a propeptide. Residues 29-51 (EDQVFAEEDKGPHPSQYAHTPDR) are disordered. At Phe-82 the chain carries Phenylalanine amide. Residues 85 to 100 (NAWGPWSKEQLSPQAR) constitute a propeptide that is removed on maturation. A Phenylalanine amide modification is found at Phe-111.

Belongs to the FARP (FMRFamide related peptide) family.

The protein resides in the secreted. Morphine modulating peptides. Have wide-ranging physiologic effects, including the modulation of morphine-induced analgesia, elevation of arterial blood pressure, and increased somatostatin secretion from the pancreas. Neuropeptide FF and SF potentiate and sensitize ASIC2 and ASIC3 channels. The chain is Pro-FMRFamide-related neuropeptide FF (Npff) from Rattus norvegicus (Rat).